The primary structure comprises 514 residues: Maturase K (514 aa).

It belongs to the intron maturase 2 family. MatK subfamily.

It is found in the plastid. Its subcellular location is the chloroplast. Usually encoded in the trnK tRNA gene intron. Probably assists in splicing its own and other chloroplast group II introns. The protein is Maturase K of Acer monspessulanum (Montpellier maple).